The primary structure comprises 242 residues: Probable transcriptional regulatory protein NGO_1291 (242 aa).

The protein belongs to the TACO1 family.

It localises to the cytoplasm. This chain is Probable transcriptional regulatory protein NGO_1291, found in Neisseria gonorrhoeae (strain ATCC 700825 / FA 1090).